We begin with the raw amino-acid sequence, 133 residues long: Holo-[acyl-carrier-protein] synthase (133 aa).

Residues Asp8 and Glu57 each coordinate Mg(2+).

The protein belongs to the P-Pant transferase superfamily. AcpS family. It depends on Mg(2+) as a cofactor.

Its subcellular location is the cytoplasm. It catalyses the reaction apo-[ACP] + CoA = holo-[ACP] + adenosine 3',5'-bisphosphate + H(+). Its function is as follows. Transfers the 4'-phosphopantetheine moiety from coenzyme A to a Ser of acyl-carrier-protein. This Bartonella tribocorum (strain CIP 105476 / IBS 506) protein is Holo-[acyl-carrier-protein] synthase.